The following is a 481-amino-acid chain: Tryptophan biosynthesis protein TrpCF (481 aa).

The tract at residues 1–283 (MKMTDFNTQQ…LAVRKVTLGE (283 aa)) is indole-3-glycerol phosphate synthase. Residues 284–481 (NKVCGLTHPD…QAAFHAIRNY (198 aa)) form an N-(5'-phosphoribosyl)anthranilate isomerase region.

This sequence in the N-terminal section; belongs to the TrpC family. It in the C-terminal section; belongs to the TrpF family. Monomer.

The enzyme catalyses N-(5-phospho-beta-D-ribosyl)anthranilate = 1-(2-carboxyphenylamino)-1-deoxy-D-ribulose 5-phosphate. The catalysed reaction is 1-(2-carboxyphenylamino)-1-deoxy-D-ribulose 5-phosphate + H(+) = (1S,2R)-1-C-(indol-3-yl)glycerol 3-phosphate + CO2 + H2O. It participates in amino-acid biosynthesis; L-tryptophan biosynthesis; L-tryptophan from chorismate: step 3/5. Its pathway is amino-acid biosynthesis; L-tryptophan biosynthesis; L-tryptophan from chorismate: step 4/5. Functionally, bifunctional enzyme that catalyzes two sequential steps of tryptophan biosynthetic pathway. The first reaction is catalyzed by the isomerase, coded by the TrpF domain; the second reaction is catalyzed by the synthase, coded by the TrpC domain. The sequence is that of Tryptophan biosynthesis protein TrpCF (trpC) from Vibrio parahaemolyticus serotype O3:K6 (strain RIMD 2210633).